The primary structure comprises 198 residues: Putative 3-methyladenine DNA glycosylase (198 aa).

The protein belongs to the DNA glycosylase MPG family.

In Rhizobium johnstonii (strain DSM 114642 / LMG 32736 / 3841) (Rhizobium leguminosarum bv. viciae), this protein is Putative 3-methyladenine DNA glycosylase.